The chain runs to 156 residues: 3-hydroxyacyl-[acyl-carrier-protein] dehydratase FabZ (156 aa).

His-50 is a catalytic residue.

This sequence belongs to the thioester dehydratase family. FabZ subfamily.

The protein resides in the cytoplasm. It catalyses the reaction a (3R)-hydroxyacyl-[ACP] = a (2E)-enoyl-[ACP] + H2O. Involved in unsaturated fatty acids biosynthesis. Catalyzes the dehydration of short chain beta-hydroxyacyl-ACPs and long chain saturated and unsaturated beta-hydroxyacyl-ACPs. The polypeptide is 3-hydroxyacyl-[acyl-carrier-protein] dehydratase FabZ (Janthinobacterium sp. (strain Marseille) (Minibacterium massiliensis)).